The chain runs to 72 residues: Small, acid-soluble spore protein 1 (72 aa).

It belongs to the alpha/beta-type SASP family.

Its function is as follows. SASP are bound to spore DNA. They are double-stranded DNA-binding proteins that cause DNA to change to an a-like conformation. They protect the DNA backbone from chemical and enzymatic cleavage and are thus involved in dormant spore's high resistance to UV light. This Halobacillus halophilus (strain ATCC 35676 / DSM 2266 / JCM 20832 / KCTC 3685 / LMG 17431 / NBRC 102448 / NCIMB 2269) (Sporosarcina halophila) protein is Small, acid-soluble spore protein 1 (Sh-1).